The primary structure comprises 1450 residues: Protein clueless (1450 aa).

Disordered regions lie at residues 1–126 (MALE…PGSE) and 266–287 (KTRPDSVDCTPPEYVTPGVSEP). A compositionally biased stretch (low complexity) spans 29–60 (NNSSAGKKQQQQQQPNQNQNLVNGNGNAADGP). The segment covering 62 to 71 (AKKKGKKNRN) has biased composition (basic residues). At S271 the chain carries Phosphoserine. The region spanning 425–667 (RAEDAFSSKL…RTFPPDVNFL (243 aa)) is the Clu domain. Basic and acidic residues-rich tracts occupy residues 725 to 734 (KQSEKTEEKA) and 743 to 765 (KESSETKEAEAEKPVEKKEEEKQ). Disordered regions lie at residues 725–775 (KQSE…TKTA) and 959–1011 (PAVS…SDWT). Over residues 968 to 983 (KKRSNGNKHNKHKSKG) the composition is skewed to basic residues. Residues 984–1008 (NKQQASGNQNGSSAGSSSGGSSSSS) show a composition bias toward low complexity. TPR repeat units lie at residues 1102 to 1135 (AYNFYTTGQAKIQQGMFKEGYELISEALNLLNNV), 1228 to 1261 (ALIDSNISLILHALGEYELSLRFIEHALKLNIKY), and 1263 to 1296 (GSKAMHVAFSYHLMARTQSCMGDFRSALNNEKET). The tract at residues 1410–1450 (NNNGDTEAETKDATKDNKDLAGASTQLTNGDKDAETAVASS) is disordered. A compositionally biased stretch (basic and acidic residues) spans 1417–1428 (AETKDATKDNKD).

It belongs to the CLU family.

The protein resides in the cytoplasm. In terms of biological role, mRNA-binding protein involved in proper cytoplasmic distribution of mitochondria. This Drosophila ananassae (Fruit fly) protein is Protein clueless.